A 64-amino-acid polypeptide reads, in one-letter code: Sulfur carrier protein ThiS (64 aa).

At Gly-64 the chain carries 1-thioglycine; alternate. Residue Gly-64 is modified to Glycyl adenylate; alternate. Residue Gly-64 forms a Glycyl cysteine thioester (Gly-Cys) (interchain with C-192 in TtuC); alternate linkage.

Belongs to the sulfur carrier protein ThiS family. C-terminal thiocarboxylation occurs in 2 steps, it is first acyl-adenylated (-COAMP) by TtuC, then thiocarboxylated (-COSH) by the cysteine desulfurases IscS or SufS.

It participates in cofactor biosynthesis; thiamine diphosphate biosynthesis. In terms of biological role, is the sulfur donor in the synthesis of the thiazole phosphate moiety of thiamine phosphate. This is Sulfur carrier protein ThiS from Thermus thermophilus (strain ATCC BAA-163 / DSM 7039 / HB27).